The primary structure comprises 134 residues: Ribonuclease P protein component (134 aa).

The protein belongs to the RnpA family. In terms of assembly, consists of a catalytic RNA component (M1 or rnpB) and a protein subunit.

The enzyme catalyses Endonucleolytic cleavage of RNA, removing 5'-extranucleotides from tRNA precursor.. Functionally, RNaseP catalyzes the removal of the 5'-leader sequence from pre-tRNA to produce the mature 5'-terminus. It can also cleave other RNA substrates such as 4.5S RNA. The protein component plays an auxiliary but essential role in vivo by binding to the 5'-leader sequence and broadening the substrate specificity of the ribozyme. This is Ribonuclease P protein component from Pseudomonas putida (strain GB-1).